Consider the following 258-residue polypeptide: Ribosomal RNA small subunit methyltransferase J (258 aa).

S-adenosyl-L-methionine is bound by residues 107 to 108, 123 to 124, and D177; these read RD and ER.

This sequence belongs to the methyltransferase superfamily. RsmJ family.

The protein localises to the cytoplasm. The enzyme catalyses guanosine(1516) in 16S rRNA + S-adenosyl-L-methionine = N(2)-methylguanosine(1516) in 16S rRNA + S-adenosyl-L-homocysteine + H(+). Functionally, specifically methylates the guanosine in position 1516 of 16S rRNA. The polypeptide is Ribosomal RNA small subunit methyltransferase J (Stutzerimonas stutzeri (strain A1501) (Pseudomonas stutzeri)).